A 176-amino-acid chain; its full sequence is NAD(P)H-quinone oxidoreductase subunit 6, chloroplastic (176 aa).

Helical transmembrane passes span 10–30 (ILVL…VLLT), 33–53 (TFSA…YILL), 60–80 (VAQL…AVMF), 92–112 (FWTI…FSLM), and 152–172 (FYLP…GAIT).

The protein belongs to the complex I subunit 6 family. In terms of assembly, NDH is composed of at least 16 different subunits, 5 of which are encoded in the nucleus.

The protein localises to the plastid. The protein resides in the chloroplast thylakoid membrane. The catalysed reaction is a plastoquinone + NADH + (n+1) H(+)(in) = a plastoquinol + NAD(+) + n H(+)(out). It catalyses the reaction a plastoquinone + NADPH + (n+1) H(+)(in) = a plastoquinol + NADP(+) + n H(+)(out). NDH shuttles electrons from NAD(P)H:plastoquinone, via FMN and iron-sulfur (Fe-S) centers, to quinones in the photosynthetic chain and possibly in a chloroplast respiratory chain. The immediate electron acceptor for the enzyme in this species is believed to be plastoquinone. Couples the redox reaction to proton translocation, and thus conserves the redox energy in a proton gradient. The polypeptide is NAD(P)H-quinone oxidoreductase subunit 6, chloroplastic (ndhG) (Oryza nivara (Indian wild rice)).